Reading from the N-terminus, the 494-residue chain is 3-octaprenyl-4-hydroxybenzoate carboxy-lyase (494 aa).

Asn172 serves as a coordination point for Mn(2+). Residues 175 to 177, 189 to 191, and 194 to 195 each bind prenylated FMN; these read IYR, RWL, and RG. Glu238 contacts Mn(2+). Asp287 (proton donor) is an active-site residue.

It belongs to the UbiD family. As to quaternary structure, homohexamer. Prenylated FMN is required as a cofactor. It depends on Mn(2+) as a cofactor.

It is found in the cell membrane. It catalyses the reaction a 4-hydroxy-3-(all-trans-polyprenyl)benzoate + H(+) = a 2-(all-trans-polyprenyl)phenol + CO2. The protein operates within cofactor biosynthesis; ubiquinone biosynthesis. In terms of biological role, catalyzes the decarboxylation of 3-octaprenyl-4-hydroxy benzoate to 2-octaprenylphenol, an intermediate step in ubiquinone biosynthesis. The protein is 3-octaprenyl-4-hydroxybenzoate carboxy-lyase of Escherichia coli O9:H4 (strain HS).